Reading from the N-terminus, the 151-residue chain is Ribosomal RNA large subunit methyltransferase H (151 aa).

S-adenosyl-L-methionine-binding positions include Leu-73, Gly-100, and 119–124; that span reads LSDLTM.

Belongs to the RNA methyltransferase RlmH family. Homodimer.

Its subcellular location is the cytoplasm. It carries out the reaction pseudouridine(1915) in 23S rRNA + S-adenosyl-L-methionine = N(3)-methylpseudouridine(1915) in 23S rRNA + S-adenosyl-L-homocysteine + H(+). In terms of biological role, specifically methylates the pseudouridine at position 1915 (m3Psi1915) in 23S rRNA. The polypeptide is Ribosomal RNA large subunit methyltransferase H (Aliarcobacter butzleri (strain RM4018) (Arcobacter butzleri)).